A 611-amino-acid polypeptide reads, in one-letter code: Protein KINASE OF THE OUTER CHLOROPLAST MEMBRANE 1 (611 aa).

At 1 to 555 (MASKIIAGKP…LEDFHWAVRP (555 aa)) the chain is on the cytoplasmic side. The 268-residue stretch at 39 to 306 (LKLRHRIGRG…TDILLVLKSL (268 aa)) folds into the Protein kinase domain. ATP contacts are provided by residues 45–53 (IGRGPFGDV) and K74. A helical membrane pass occupies residues 556-572 (LLIAMGLLTAMKLGICV). The Chloroplast intermembrane portion of the chain corresponds to 573–611 (RKKIGRSKDGKQRDGSTGQGDCKIPDGKGSDKSKWLVFF). Positions 579 to 606 (SKDGKQRDGSTGQGDCKIPDGKGSDKSK) are disordered. A compositionally biased stretch (basic and acidic residues) spans 595 to 606 (KIPDGKGSDKSK).

It belongs to the protein kinase superfamily. Ser/Thr protein kinase family. Associates with the TOC complex containing, at least, translocons at the chloroplast envelope (e.g. TOCs and TICs such as TOC159, TOC75, TOC33 and TIC56).

The protein localises to the plastid. Its subcellular location is the chloroplast outer membrane. The enzyme catalyses L-seryl-[protein] + ATP = O-phospho-L-seryl-[protein] + ADP + H(+). It carries out the reaction L-threonyl-[protein] + ATP = O-phospho-L-threonyl-[protein] + ADP + H(+). Serine/threonine protein kinase acting as a regulatory component of the plastid protein import machinery by phosphorylating import receptors (e.g. the A-domain of TOC159, TOC120 and TOC132). Supports preprotein import and contributes to efficient chloroplast biogenesis, thus being required for survival during de-etiolation. The chain is Protein KINASE OF THE OUTER CHLOROPLAST MEMBRANE 1 from Arabidopsis thaliana (Mouse-ear cress).